A 309-amino-acid polypeptide reads, in one-letter code: L-2-keto-3-deoxyarabonate dehydratase (309 aa).

The Schiff-base intermediate with substrate role is filled by Lys-171.

Belongs to the DapA family. Homodimer.

It catalyses the reaction 2-dehydro-3-deoxy-L-arabinonate = 2,5-dioxopentanoate + H2O. Catalyzes the dehydration of L-2-keto-3-deoxyarabonate (L-KDA) to alpha-ketoglutaric semialdehyde (alphaKGSA). Is involved in a degradation pathway of L-arabinose that allows A.brasilense to grow on L-arabinose as a sole carbon source. This chain is L-2-keto-3-deoxyarabonate dehydratase (araD), found in Azospirillum brasilense.